A 657-amino-acid polypeptide reads, in one-letter code: MTDRIVPATLVFREDGTVVSPLYGDIYHSAAGALAQADHVFIRGNGLPERWRHERAFTIIETGFGTGCNFLATWAAWRADPSHCERLHFVSVEKHPFAREDLRRAAAHIVAYTTITPIAPLVDELANAWPALTPGVHRLEFDDGRVTLTLVFGDALDVLPNLALRAHAFYLDGFAPSKNADLWSPAIFKSLAKLADERATFATYTSSGAVKRALDEAGFAYRKVDGFAGKRAMLVGEFAPRWRVRRHEPPRAFSTDRRDAIVIGAGLAGCAVVERLAARGWHVTLIERRERIASEASGNPAGVFHPMIARDDNLAARLSRAGFLHALHRWRALERAGHAFSRSTHGLVQLATSDDEFERMRESIDALGVPAELASALSRDDARALLRTDVAHGGWLFAQGGSISPATLAAAQCAAAGDRLSRIVGVEIARLERGGDGRWRALDASGATIAQASVVVVANAADAARIAGLRHAPTQRVRGQLTLLPPGSAPAVPLPVIGDGYVVPLANGVTLTGATYEPDDTDATPREAGHRENLERLERLLPAFSANALDAGALAGRVGFRCVASDRLPLVGELGDEAAAAREAAALTGARLRDVPRATGLYGAFGYGSRGLVWAALGAELIAAQIDGEPWPLERELAEAIDPARFLVRALRHGRVA.

Residues 1-239 are tRNA (mnm(5)s(2)U34)-methyltransferase; that stretch reads MTDRIVPATL…KRAMLVGEFA (239 aa). Residues 263–657 form an FAD-dependent cmnm(5)s(2)U34 oxidoreductase region; sequence IGAGLAGCAV…VRALRHGRVA (395 aa).

The protein in the N-terminal section; belongs to the methyltransferase superfamily. tRNA (mnm(5)s(2)U34)-methyltransferase family. It in the C-terminal section; belongs to the DAO family. It depends on FAD as a cofactor.

The protein localises to the cytoplasm. The enzyme catalyses 5-aminomethyl-2-thiouridine(34) in tRNA + S-adenosyl-L-methionine = 5-methylaminomethyl-2-thiouridine(34) in tRNA + S-adenosyl-L-homocysteine + H(+). In terms of biological role, catalyzes the last two steps in the biosynthesis of 5-methylaminomethyl-2-thiouridine (mnm(5)s(2)U) at the wobble position (U34) in tRNA. Catalyzes the FAD-dependent demodification of cmnm(5)s(2)U34 to nm(5)s(2)U34, followed by the transfer of a methyl group from S-adenosyl-L-methionine to nm(5)s(2)U34, to form mnm(5)s(2)U34. This is tRNA 5-methylaminomethyl-2-thiouridine biosynthesis bifunctional protein MnmC from Burkholderia mallei (strain SAVP1).